A 185-amino-acid chain; its full sequence is Superoxide dismutase [Cu-Zn] (185 aa).

A signal peptide spans 1-18 (MTAFYKLCGMSMLSLVLA). Residues His85, His87, and His102 each coordinate Cu cation. The cysteines at positions 92 and 180 are disulfide-linked. Positions 102, 111, 120, and 123 each coordinate Zn(2+). His158 is a binding site for Cu cation.

It belongs to the Cu-Zn superoxide dismutase family. Homodimer. Requires Cu cation as cofactor. Zn(2+) is required as a cofactor.

The protein localises to the periplasm. The catalysed reaction is 2 superoxide + 2 H(+) = H2O2 + O2. Functionally, destroys radicals which are normally produced within the cells and which are toxic to biological systems. The protein is Superoxide dismutase [Cu-Zn] (sodC) of Francisella tularensis subsp. holarctica (strain LVS).